The primary structure comprises 521 residues: Matrix metalloproteinase-A (521 aa).

A signal peptide spans 1 to 21; it reads MFTGLHDILIILFLLVTLKIA. Positions 22-95 are cleaved as a propeptide — activation peptide; sequence QNVDHTKFLQ…EDHQKSRGKR (74 aa). A Cysteine switch motif is present at residues 78–85; that stretch reads PRCGHPDV. C80 is a binding site for Zn(2+). The Extracellular segment spans residues 96–500; it reads YAPPQFKWKE…FCPRNEKLVL (405 aa). N199 carries an N-linked (GlcNAc...) asparagine glycan. H215 serves as a coordination point for Zn(2+). The active site involves E216. Zn(2+)-binding residues include H219 and H225. The segment at 259–298 is disordered; the sequence is KASKKENEEEERKTENEDKRRKTEKDRGRTREHESDDIRP. Positions 261-298 are enriched in basic and acidic residues; sequence SKKENEEEERKTENEDKRRKTEKDRGRTREHESDDIRP. Hemopexin repeat units follow at residues 300-347, 391-443, and 444-492; these read ECRV…FPGL, EKYV…WARV, and PKGV…FGFC. N469 carries N-linked (GlcNAc...) asparagine glycosylation. Residues 501–521 traverse the membrane as a helical segment; sequence NSSSSHFSLIYATITILILIF.

It belongs to the peptidase M10A family. Requires Zn(2+) as cofactor. In terms of tissue distribution, expressed in the anchor cell. Expressed in the anchor cell throughout the L3 and the early L4 stage, but not in vulva precursor cells P6.p, P6.px, or P6.pxx. Expression in P6.pxxx cells begins in late-L4 stage. During L4 lethargus, expressed in all four vulE cells, but not in vulF cells. The expression in vulE cells persists in adulthood. In males, expressed in the linker cell (LC) from the early L4 stage until LC death during the L4-to-adult molt.

The protein localises to the cell membrane. It localises to the basolateral cell membrane. Metalloprotease which, together with cadherin cdh-3 and hemicentin him-4, plays a role in anchor cell (AC) invasion during postembryonic vulval development probably by promoting the degradation of the basement membrane separating the gonad from the vulva epithelium. The polypeptide is Matrix metalloproteinase-A (Caenorhabditis elegans).